Consider the following 260-residue polypeptide: MILRLLECRFFTIALCDAAEPWQLGFQDAATPMMQGIIDLHHDIFFFLILILVFVLWMLVRALWHFNEQTNPIPQRIVHGTTIEIIWTIFPSVILLFIAIPSFALLYSMDGVLVDPAITIKAIGHQWYWTYEYSDYNSSDEQSLTFDSYMIPEDDLELGQLRLLEVDNRVVVPAKTHLRMIVTSADVLHSWAVPSLGVKCDAVPGRLNLTSILVQREGVYYGQCSEICGTNHAFMPIVVEAVTLKDYADWVSNQLILQTN.

Topologically, residues 1–43 (MILRLLECRFFTIALCDAAEPWQLGFQDAATPMMQGIIDLHHD) are mitochondrial intermembrane. The chain crosses the membrane as a helical span at residues 44–64 (IFFFLILILVFVLWMLVRALW). Residues 65–84 (HFNEQTNPIPQRIVHGTTIE) are Mitochondrial matrix-facing. A helical transmembrane segment spans residues 85-105 (IIWTIFPSVILLFIAIPSFAL). Topologically, residues 106–260 (LYSMDGVLVD…VSNQLILQTN (155 aa)) are mitochondrial intermembrane. Residues His-189, Cys-224, Glu-226, Cys-228, His-232, and Met-235 each coordinate Cu cation. Glu-226 lines the Mg(2+) pocket.

The protein belongs to the cytochrome c oxidase subunit 2 family. Component of the cytochrome c oxidase (complex IV, CIV), a multisubunit enzyme composed of a catalytic core of 3 subunits and several supernumerary subunits. The complex exists as a monomer or a dimer and forms supercomplexes (SCs) in the inner mitochondrial membrane with ubiquinol-cytochrome c oxidoreductase (cytochrome b-c1 complex, complex III, CIII). The cofactor is Cu cation.

It is found in the mitochondrion inner membrane. The catalysed reaction is 4 Fe(II)-[cytochrome c] + O2 + 8 H(+)(in) = 4 Fe(III)-[cytochrome c] + 2 H2O + 4 H(+)(out). In terms of biological role, component of the cytochrome c oxidase, the last enzyme in the mitochondrial electron transport chain which drives oxidative phosphorylation. The respiratory chain contains 3 multisubunit complexes succinate dehydrogenase (complex II, CII), ubiquinol-cytochrome c oxidoreductase (cytochrome b-c1 complex, complex III, CIII) and cytochrome c oxidase (complex IV, CIV), that cooperate to transfer electrons derived from NADH and succinate to molecular oxygen, creating an electrochemical gradient over the inner membrane that drives transmembrane transport and the ATP synthase. Cytochrome c oxidase is the component of the respiratory chain that catalyzes the reduction of oxygen to water. Electrons originating from reduced cytochrome c in the intermembrane space (IMS) are transferred via the dinuclear copper A center (CU(A)) of subunit 2 and heme A of subunit 1 to the active site in subunit 1, a binuclear center (BNC) formed by heme A3 and copper B (CU(B)). The BNC reduces molecular oxygen to 2 water molecules using 4 electrons from cytochrome c in the IMS and 4 protons from the mitochondrial matrix. This is Cytochrome c oxidase subunit 2 (COX2) from Zea mays (Maize).